The primary structure comprises 362 residues: Class I histocompatibility antigen, Gogo-B*0101 alpha chain (362 aa).

An N-terminal signal peptide occupies residues 1 to 24; it reads MRVTAPRTLLLLLSAALALTETWA. The interval 25-114 is alpha-1; it reads GSHSMRYFDT…ALRYYNQSEA (90 aa). Topologically, residues 25-308 are extracellular; sequence GSHSMRYFDT…EPSSQSTIPI (284 aa). An N-linked (GlcNAc...) asparagine glycan is attached at N110. An alpha-2 region spans residues 115 to 206; that stretch reads GSHTIQRMFG…ENGRETLQRA (92 aa). 2 cysteine pairs are disulfide-bonded: C125–C188 and C227–C283. The interval 207–298 is alpha-3; it reads DTPKTHVTHH…GLPKPLTLRW (92 aa). The Ig-like C1-type domain maps to 209–295; it reads PKTHVTHHPI…QHEGLPKPLT (87 aa). The connecting peptide stretch occupies residues 299–308; it reads EPSSQSTIPI. Residues 309–332 form a helical membrane-spanning segment; that stretch reads VGIVAGLAVLAVVVIGAVVTAVIC. The Cytoplasmic segment spans residues 333–362; sequence RRKSSGGKGGSYSQAASSDSAQGSDVSLTA. The interval 335-362 is disordered; it reads KSSGGKGGSYSQAASSDSAQGSDVSLTA. The segment covering 343-362 has biased composition (low complexity); that stretch reads SYSQAASSDSAQGSDVSLTA. A phosphoserine mark is found at S356 and S359.

It belongs to the MHC class I family. Heterodimer of an alpha chain and a beta chain (beta-2-microglobulin).

Its subcellular location is the membrane. Involved in the presentation of foreign antigens to the immune system. The protein is Class I histocompatibility antigen, Gogo-B*0101 alpha chain of Gorilla gorilla gorilla (Western lowland gorilla).